The following is a 459-amino-acid chain: Argininosuccinate lyase (459 aa).

Belongs to the lyase 1 family. Argininosuccinate lyase subfamily.

It localises to the cytoplasm. The enzyme catalyses 2-(N(omega)-L-arginino)succinate = fumarate + L-arginine. Its pathway is amino-acid biosynthesis; L-arginine biosynthesis; L-arginine from L-ornithine and carbamoyl phosphate: step 3/3. The polypeptide is Argininosuccinate lyase (Staphylococcus aureus (strain MSSA476)).